Consider the following 550-residue polypeptide: Chaperonin GroEL 1 (550 aa).

Residues 29–32 (TIGP), 86–90 (DGTTT), Gly413, 477–479 (NAA), and Asp493 contribute to the ATP site. Positions 524–550 (AVSDGDHGHSHGHGHSHGHSHPQGPGF) are disordered. The segment covering 533 to 543 (SHGHGHSHGHS) has biased composition (basic residues).

The protein belongs to the chaperonin (HSP60) family. As to quaternary structure, forms a cylinder of 14 subunits composed of two heptameric rings stacked back-to-back. Interacts with the co-chaperonin GroES.

Its subcellular location is the cytoplasm. It carries out the reaction ATP + H2O + a folded polypeptide = ADP + phosphate + an unfolded polypeptide.. Functionally, together with its co-chaperonin GroES, plays an essential role in assisting protein folding. The GroEL-GroES system forms a nano-cage that allows encapsulation of the non-native substrate proteins and provides a physical environment optimized to promote and accelerate protein folding. The polypeptide is Chaperonin GroEL 1 (Frankia alni (strain DSM 45986 / CECT 9034 / ACN14a)).